Reading from the N-terminus, the 274-residue chain is Large ribosomal subunit protein uL2 (274 aa).

A disordered region spans residues 223–274; it reads VAMNPVDHPHGGGEGRTGEGRHAVDPWGNLTKGYRTRNNKRTQSMIVSRRKK. Basic and acidic residues predominate over residues 229-246; the sequence is DHPHGGGEGRTGEGRHAV.

The protein belongs to the universal ribosomal protein uL2 family. As to quaternary structure, part of the 50S ribosomal subunit. Forms a bridge to the 30S subunit in the 70S ribosome.

Functionally, one of the primary rRNA binding proteins. Required for association of the 30S and 50S subunits to form the 70S ribosome, for tRNA binding and peptide bond formation. It has been suggested to have peptidyltransferase activity; this is somewhat controversial. Makes several contacts with the 16S rRNA in the 70S ribosome. The protein is Large ribosomal subunit protein uL2 of Verminephrobacter eiseniae (strain EF01-2).